The sequence spans 76 residues: uncharacterized protein (76 aa).

An N-terminal signal peptide occupies residues 1 to 20; it reads MKNAVLVFLLLSVFALSVNA.

Prismatic layer of shell (at protein level). Expressed primarily in the mantle with equal levels in the mantle edge and the mantle pallium.

The protein localises to the secreted. This is an uncharacterized protein from Margaritifera margaritifera (Freshwater pearl mussel).